A 290-amino-acid polypeptide reads, in one-letter code: Nucleotide-binding protein Aave_3603 (290 aa).

13 to 20 serves as a coordination point for ATP; the sequence is GMSGSGKS. 62 to 65 contributes to the GTP binding site; sequence DVRS.

It belongs to the RapZ-like family.

Displays ATPase and GTPase activities. In Paracidovorax citrulli (strain AAC00-1) (Acidovorax citrulli), this protein is Nucleotide-binding protein Aave_3603.